We begin with the raw amino-acid sequence, 351 residues long: Ferredoxin--NADP reductase (351 aa).

FAD-binding residues include Asp-44, Gln-52, Tyr-57, Ile-97, Phe-132, Asp-296, and Ser-337.

This sequence belongs to the ferredoxin--NADP reductase type 2 family. As to quaternary structure, homodimer. FAD serves as cofactor.

The catalysed reaction is 2 reduced [2Fe-2S]-[ferredoxin] + NADP(+) + H(+) = 2 oxidized [2Fe-2S]-[ferredoxin] + NADPH. This chain is Ferredoxin--NADP reductase, found in Burkholderia vietnamiensis (strain G4 / LMG 22486) (Burkholderia cepacia (strain R1808)).